Reading from the N-terminus, the 58-residue chain is MAEVRLGENESIDSAIRRFKKKIQKAGILSEVKRRERYEKPSLRRKRKAEAARKGGRN.

Positions 38 to 58 (YEKPSLRRKRKAEAARKGGRN) are disordered. Basic and acidic residues predominate over residues 49 to 58 (AEAARKGGRN).

The protein belongs to the bacterial ribosomal protein bS21 family.

This is Small ribosomal subunit protein bS21A from Trichormus variabilis (strain ATCC 29413 / PCC 7937) (Anabaena variabilis).